Consider the following 430-residue polypeptide: UDP-N-acetylglucosamine 1-carboxyvinyltransferase (430 aa).

Phosphoenolpyruvate is bound at residue 22-23 (KN). Arg-102 contributes to the UDP-N-acetyl-alpha-D-glucosamine binding site. The Proton donor role is filled by Cys-126. Residue Cys-126 is modified to 2-(S-cysteinyl)pyruvic acid O-phosphothioketal. Residues 131-135 (RPVDL), 172-175 (KVSV), Asp-317, and Ile-339 each bind UDP-N-acetyl-alpha-D-glucosamine.

Belongs to the EPSP synthase family. MurA subfamily.

The protein localises to the cytoplasm. The enzyme catalyses phosphoenolpyruvate + UDP-N-acetyl-alpha-D-glucosamine = UDP-N-acetyl-3-O-(1-carboxyvinyl)-alpha-D-glucosamine + phosphate. Its pathway is cell wall biogenesis; peptidoglycan biosynthesis. Functionally, cell wall formation. Adds enolpyruvyl to UDP-N-acetylglucosamine. This Rhizobium etli (strain ATCC 51251 / DSM 11541 / JCM 21823 / NBRC 15573 / CFN 42) protein is UDP-N-acetylglucosamine 1-carboxyvinyltransferase.